We begin with the raw amino-acid sequence, 277 residues long: Probable endonuclease 4 (277 aa).

9 residues coordinate Zn(2+): H70, H108, E145, D178, H181, H212, D225, H227, and E257.

Belongs to the AP endonuclease 2 family. It depends on Zn(2+) as a cofactor.

The catalysed reaction is Endonucleolytic cleavage to 5'-phosphooligonucleotide end-products.. Endonuclease IV plays a role in DNA repair. It cleaves phosphodiester bonds at apurinic or apyrimidinic (AP) sites, generating a 3'-hydroxyl group and a 5'-terminal sugar phosphate. In Mycoplasmopsis pulmonis (strain UAB CTIP) (Mycoplasma pulmonis), this protein is Probable endonuclease 4.